The sequence spans 354 residues: Holliday junction branch migration complex subunit RuvB (354 aa).

Positions 1-24 (MSIQTDDFAPVPPPKRVVSAAPTS) are disordered. The segment at 5 to 195 (TDDFAPVPPP…FGIVARLEFY (191 aa)) is large ATPase domain (RuvB-L). ATP-binding positions include Leu-34, Arg-35, Gly-76, Lys-79, Thr-80, Thr-81, 142–144 (EDY), Arg-185, Tyr-195, and Arg-232. Thr-80 contacts Mg(2+). Positions 196-266 (TPEELSRIVT…IAQRALAMLD (71 aa)) are small ATPAse domain (RuvB-S). Residues 269–354 (PQGFDVMDRK…RQHTDLFGPA (86 aa)) form a head domain (RuvB-H) region. DNA contacts are provided by Arg-324 and Arg-329.

The protein belongs to the RuvB family. Homohexamer. Forms an RuvA(8)-RuvB(12)-Holliday junction (HJ) complex. HJ DNA is sandwiched between 2 RuvA tetramers; dsDNA enters through RuvA and exits via RuvB. An RuvB hexamer assembles on each DNA strand where it exits the tetramer. Each RuvB hexamer is contacted by two RuvA subunits (via domain III) on 2 adjacent RuvB subunits; this complex drives branch migration. In the full resolvosome a probable DNA-RuvA(4)-RuvB(12)-RuvC(2) complex forms which resolves the HJ.

Its subcellular location is the cytoplasm. The enzyme catalyses ATP + H2O = ADP + phosphate + H(+). The RuvA-RuvB-RuvC complex processes Holliday junction (HJ) DNA during genetic recombination and DNA repair, while the RuvA-RuvB complex plays an important role in the rescue of blocked DNA replication forks via replication fork reversal (RFR). RuvA specifically binds to HJ cruciform DNA, conferring on it an open structure. The RuvB hexamer acts as an ATP-dependent pump, pulling dsDNA into and through the RuvAB complex. RuvB forms 2 homohexamers on either side of HJ DNA bound by 1 or 2 RuvA tetramers; 4 subunits per hexamer contact DNA at a time. Coordinated motions by a converter formed by DNA-disengaged RuvB subunits stimulates ATP hydrolysis and nucleotide exchange. Immobilization of the converter enables RuvB to convert the ATP-contained energy into a lever motion, pulling 2 nucleotides of DNA out of the RuvA tetramer per ATP hydrolyzed, thus driving DNA branch migration. The RuvB motors rotate together with the DNA substrate, which together with the progressing nucleotide cycle form the mechanistic basis for DNA recombination by continuous HJ branch migration. Branch migration allows RuvC to scan DNA until it finds its consensus sequence, where it cleaves and resolves cruciform DNA. This is Holliday junction branch migration complex subunit RuvB from Paracidovorax citrulli (strain AAC00-1) (Acidovorax citrulli).